The primary structure comprises 332 residues: Biotin synthase (332 aa).

A Radical SAM core domain is found at 53-283 (WGKGGVHACS…VHPRKTIKFA (231 aa)). [4Fe-4S] cluster is bound by residues Cys71, Cys75, and Cys78. Residues Cys150, Cys211, and Lys281 each contribute to the [2Fe-2S] cluster site.

It belongs to the radical SAM superfamily. Biotin synthase family. In terms of assembly, homodimer. It depends on [4Fe-4S] cluster as a cofactor. Requires [2Fe-2S] cluster as cofactor.

The catalysed reaction is (4R,5S)-dethiobiotin + (sulfur carrier)-SH + 2 reduced [2Fe-2S]-[ferredoxin] + 2 S-adenosyl-L-methionine = (sulfur carrier)-H + biotin + 2 5'-deoxyadenosine + 2 L-methionine + 2 oxidized [2Fe-2S]-[ferredoxin]. The protein operates within cofactor biosynthesis; biotin biosynthesis; biotin from 7,8-diaminononanoate: step 2/2. Its function is as follows. Catalyzes the conversion of dethiobiotin (DTB) to biotin by the insertion of a sulfur atom into dethiobiotin via a radical-based mechanism. The polypeptide is Biotin synthase (Chlorobium luteolum (strain DSM 273 / BCRC 81028 / 2530) (Pelodictyon luteolum)).